Reading from the N-terminus, the 141-residue chain is Large ribosomal subunit protein bL17 (141 aa).

The segment at 120-141 (TSAKGQDSGPVLTADEDEFEAA) is disordered.

It belongs to the bacterial ribosomal protein bL17 family. As to quaternary structure, part of the 50S ribosomal subunit. Contacts protein L32.

This chain is Large ribosomal subunit protein bL17, found in Novosphingobium aromaticivorans (strain ATCC 700278 / DSM 12444 / CCUG 56034 / CIP 105152 / NBRC 16084 / F199).